Reading from the N-terminus, the 128-residue chain is Large ribosomal subunit protein bL12 (128 aa).

Belongs to the bacterial ribosomal protein bL12 family. In terms of assembly, homodimer. Part of the ribosomal stalk of the 50S ribosomal subunit. Forms a multimeric L10(L12)X complex, where L10 forms an elongated spine to which 2 to 4 L12 dimers bind in a sequential fashion. Binds GTP-bound translation factors.

In terms of biological role, forms part of the ribosomal stalk which helps the ribosome interact with GTP-bound translation factors. Is thus essential for accurate translation. The chain is Large ribosomal subunit protein bL12 from Corynebacterium efficiens (strain DSM 44549 / YS-314 / AJ 12310 / JCM 11189 / NBRC 100395).